Consider the following 363-residue polypeptide: Carbamoyl phosphate synthase small chain (363 aa).

Residues 1-172 form a CPSase region; the sequence is MTKRILMLED…AFASPGDGKR (172 aa). Residues Ser-46, Gly-220, and Gly-222 each coordinate L-glutamine. The region spanning 172–359 is the Glutamine amidotransferase type-1 domain; sequence RVVLVDYGVK…MEMMNGKEEG (188 aa). The Nucleophile role is filled by Cys-247. Leu-248, Gln-251, Asn-289, Gly-291, and Tyr-292 together coordinate L-glutamine. Active-site residues include His-332 and Glu-334.

It belongs to the CarA family. As to quaternary structure, composed of two chains; the small (or glutamine) chain promotes the hydrolysis of glutamine to ammonia, which is used by the large (or ammonia) chain to synthesize carbamoyl phosphate. Tetramer of heterodimers (alpha,beta)4.

The enzyme catalyses hydrogencarbonate + L-glutamine + 2 ATP + H2O = carbamoyl phosphate + L-glutamate + 2 ADP + phosphate + 2 H(+). It carries out the reaction L-glutamine + H2O = L-glutamate + NH4(+). It participates in amino-acid biosynthesis; L-arginine biosynthesis; carbamoyl phosphate from bicarbonate: step 1/1. The protein operates within pyrimidine metabolism; UMP biosynthesis via de novo pathway; (S)-dihydroorotate from bicarbonate: step 1/3. Its function is as follows. Small subunit of the glutamine-dependent carbamoyl phosphate synthetase (CPSase). CPSase catalyzes the formation of carbamoyl phosphate from the ammonia moiety of glutamine, carbonate, and phosphate donated by ATP, constituting the first step of 2 biosynthetic pathways, one leading to arginine and/or urea and the other to pyrimidine nucleotides. The small subunit (glutamine amidotransferase) binds and cleaves glutamine to supply the large subunit with the substrate ammonia. The protein is Carbamoyl phosphate synthase small chain of Listeria monocytogenes serovar 1/2a (strain ATCC BAA-679 / EGD-e).